A 282-amino-acid polypeptide reads, in one-letter code: Cell division protein FtsQ (282 aa).

Residues Met-1–Arg-30 are Cytoplasmic-facing. The chain crosses the membrane as a helical span at residues Leu-31–Val-51. Over Ala-52–Gly-282 the chain is Periplasmic. Residues Phe-65–Arg-133 enclose the POTRA domain.

Belongs to the FtsQ/DivIB family. FtsQ subfamily.

The protein localises to the cell inner membrane. Functionally, essential cell division protein. In Syntrophotalea carbinolica (strain DSM 2380 / NBRC 103641 / GraBd1) (Pelobacter carbinolicus), this protein is Cell division protein FtsQ.